The sequence spans 229 residues: Ribonuclease HII (229 aa).

The region spanning 34 to 223 (WPVAGADEAG…LRKSEDGPEM (190 aa)) is the RNase H type-2 domain. A divalent metal cation is bound by residues Asp-40, Glu-41, and Asp-131. Residues 209 to 229 (MSFRPLRKSEDGPEMDELIPE) form a disordered region. The segment covering 220 to 229 (GPEMDELIPE) has biased composition (acidic residues).

Belongs to the RNase HII family. Requires Mn(2+) as cofactor. It depends on Mg(2+) as a cofactor.

The protein localises to the cytoplasm. It catalyses the reaction Endonucleolytic cleavage to 5'-phosphomonoester.. Functionally, endonuclease that specifically degrades the RNA of RNA-DNA hybrids. This chain is Ribonuclease HII, found in Rhizobium etli (strain CIAT 652).